Here is a 577-residue protein sequence, read N- to C-terminus: MLFSKLFAPTLKEPPKDAVLKSHKHLAQAGYIYQVGSGIYNFLPLAKKVLDKIENITHKRMQEHGAQNILMSFVVLASLWEKSGRLDKYGKELLVFKDRKDNDFVLSPTLEENITEIAANFIKSYKQLPVHLYQIHTKFRDEIRPRFGLVRAREFIMKDGYSFHEDAESLDKEFLNTQSAYKEILSDLGLDFRIVEADSGAIGGSKSREFVVLTECGEDTIVVCQNCDYAANIEIAKRSKRPEPLNVPKAQLAKFPTPNTTSAQSVAEFFKTEPYFVLKALVRKVIHKDKETLACFFVRGDDNLEEVKALNALNIIGANALELREASQKDLDNVGLIAGFIGPYGLKKHVSYIIFDEDLKEGDCLIAGANEKDFHAVGVDLKGFENLVYADIVQVKESDRCPNCQGALKYHKSLEVGHIFKLGQGYAKSLKASFLDKNGKEQFFEMGCYGIGISRLLSAILEQKSDDLGCVWTKNTAPFDVVIVVSNWKDEAQKKLAFEVYERLLQKGVDALLDDRDARFGAKMRDFELIGERLALIIGKQTLESKEFECIKRANLEKQTIKDIELEEKILEMLESE.

This sequence belongs to the class-II aminoacyl-tRNA synthetase family. ProS type 1 subfamily. In terms of assembly, homodimer.

It is found in the cytoplasm. It carries out the reaction tRNA(Pro) + L-proline + ATP = L-prolyl-tRNA(Pro) + AMP + diphosphate. Its function is as follows. Catalyzes the attachment of proline to tRNA(Pro) in a two-step reaction: proline is first activated by ATP to form Pro-AMP and then transferred to the acceptor end of tRNA(Pro). As ProRS can inadvertently accommodate and process non-cognate amino acids such as alanine and cysteine, to avoid such errors it has two additional distinct editing activities against alanine. One activity is designated as 'pretransfer' editing and involves the tRNA(Pro)-independent hydrolysis of activated Ala-AMP. The other activity is designated 'posttransfer' editing and involves deacylation of mischarged Ala-tRNA(Pro). The misacylated Cys-tRNA(Pro) is not edited by ProRS. This chain is Proline--tRNA ligase, found in Helicobacter pylori (strain ATCC 700392 / 26695) (Campylobacter pylori).